Reading from the N-terminus, the 454-residue chain is UDP-N-acetylmuramate--L-alanine ligase (454 aa).

An ATP-binding site is contributed by 113-119 (GSHGKTT).

This sequence belongs to the MurCDEF family.

It is found in the cytoplasm. The catalysed reaction is UDP-N-acetyl-alpha-D-muramate + L-alanine + ATP = UDP-N-acetyl-alpha-D-muramoyl-L-alanine + ADP + phosphate + H(+). The protein operates within cell wall biogenesis; peptidoglycan biosynthesis. Functionally, cell wall formation. This chain is UDP-N-acetylmuramate--L-alanine ligase, found in Sulfurihydrogenibium sp. (strain YO3AOP1).